Here is a 104-residue protein sequence, read N- to C-terminus: Small ribosomal subunit protein uS10 (104 aa).

This sequence belongs to the universal ribosomal protein uS10 family. In terms of assembly, part of the 30S ribosomal subunit.

Involved in the binding of tRNA to the ribosomes. The protein is Small ribosomal subunit protein uS10 of Alkaliphilus metalliredigens (strain QYMF).